Consider the following 276-residue polypeptide: Diaminopimelate epimerase (276 aa).

The substrate site is built by Asn-13, Gln-46, and Asn-66. Catalysis depends on Cys-75, which acts as the Proton donor. Substrate-binding positions include 76 to 77 (GN), Asn-159, Asn-192, and 210 to 211 (ER). Catalysis depends on Cys-219, which acts as the Proton acceptor. Substrate is bound at residue 220 to 221 (GT).

The protein belongs to the diaminopimelate epimerase family. Homodimer.

It localises to the cytoplasm. It carries out the reaction (2S,6S)-2,6-diaminopimelate = meso-2,6-diaminopimelate. It functions in the pathway amino-acid biosynthesis; L-lysine biosynthesis via DAP pathway; DL-2,6-diaminopimelate from LL-2,6-diaminopimelate: step 1/1. Catalyzes the stereoinversion of LL-2,6-diaminopimelate (L,L-DAP) to meso-diaminopimelate (meso-DAP), a precursor of L-lysine and an essential component of the bacterial peptidoglycan. The sequence is that of Diaminopimelate epimerase from Pseudomonas fluorescens (strain Pf0-1).